The following is a 403-amino-acid chain: Acetyl-CoA acetyltransferase 2 (403 aa).

The active-site Acyl-thioester intermediate is the cysteine 97. Lysine 237 contributes to the CoA binding site. Alanine 254 is a binding site for K(+). Serine 258 serves as a coordination point for CoA. Position 355 (valine 355) interacts with K(+). Residues histidine 359 and cysteine 389 each act as proton acceptor in the active site.

Belongs to the thiolase-like superfamily. Thiolase family. As to expression, expressed in root tips, emerging leaves, young leaves, stems, and anthers at the microspore stage.

The protein localises to the cytoplasm. It is found in the peroxisome. The enzyme catalyses 2 acetyl-CoA = acetoacetyl-CoA + CoA. Its pathway is metabolic intermediate biosynthesis; (R)-mevalonate biosynthesis; (R)-mevalonate from acetyl-CoA: step 1/3. Its function is as follows. Catalyzes the condensation of two molecules of acetyl-CoA to produce acetoacetyl-CoA. Generates the bulk of the acetoacetyl-CoA precursor required for the cytosol-localized, mevalonate-derived isoprenoid biosynthesis. The generated isoprenoids are required for normal growth and development. Essential protein during embryogenesis. The chain is Acetyl-CoA acetyltransferase 2 from Arabidopsis thaliana (Mouse-ear cress).